Here is a 250-residue protein sequence, read N- to C-terminus: 2,3-bisphosphoglycerate-dependent phosphoglycerate mutase (250 aa).

Arginine 10, histidine 11, asparagine 17, glycine 24, arginine 62, glutamate 89, tyrosine 92, lysine 100, arginine 116, arginine 117, histidine 184, glycine 185, and asparagine 186 together coordinate (2R)-2,3-bisphosphoglycerate. Histidine 11 functions as the Tele-phosphohistidine intermediate in the catalytic mechanism. Glycine 24 is a (2R)-3-phosphoglycerate binding site. 5 residues coordinate (2R)-3-phosphoglycerate: glutamate 89, tyrosine 92, lysine 100, arginine 116, and arginine 117. Glutamate 89 acts as the Proton donor/acceptor in catalysis. Asparagine 186 contacts (2R)-3-phosphoglycerate.

The protein belongs to the phosphoglycerate mutase family. BPG-dependent PGAM subfamily. Ubiquitously expressed with the highest expression in the sub-tegumental muscle layer (at protein level). Expressed in the tegument (at protein level).

It localises to the tegument. The enzyme catalyses (2R)-2-phosphoglycerate = (2R)-3-phosphoglycerate. It functions in the pathway carbohydrate degradation; glycolysis; pyruvate from D-glyceraldehyde 3-phosphate: step 3/5. With respect to regulation, strongly activated by 2,3-bisphosphoglycerate (2,3-BPG). Inhibited by vanadate in a dose-dependent manner. Catalyzes interconversion of 3- and 2-phosphoglycerate with 2,3-bisphosphoglycerate (2,3-BPG) as the primer of the reaction. Schistosomula have significant surface phosphoglycerate mutase activity also without 2,3-BPG. Binds human plasminogen and enhances its conversion to active thrombolytic plasmin in the presence of human tissue plasminogen activator (tPA) in vitro. Host-interactive surface protein, which may degrade vascular blood clots surrounding the worm in vivo and thus may help survival of the parasite in its host microenvironment. The chain is 2,3-bisphosphoglycerate-dependent phosphoglycerate mutase from Schistosoma mansoni (Blood fluke).